A 165-amino-acid polypeptide reads, in one-letter code: 3-hydroxyacyl-[acyl-carrier-protein] dehydratase FabZ (165 aa).

His68 is an active-site residue.

It belongs to the thioester dehydratase family. FabZ subfamily.

It localises to the cytoplasm. It carries out the reaction a (3R)-hydroxyacyl-[ACP] = a (2E)-enoyl-[ACP] + H2O. Involved in unsaturated fatty acids biosynthesis. Catalyzes the dehydration of short chain beta-hydroxyacyl-ACPs and long chain saturated and unsaturated beta-hydroxyacyl-ACPs. In Methylobacterium sp. (strain 4-46), this protein is 3-hydroxyacyl-[acyl-carrier-protein] dehydratase FabZ.